The chain runs to 339 residues: Senescence-specific cysteine protease SAG39 (339 aa).

A signal peptide spans 1–23; it reads MAMAKALLFAILGCLCLCSAVLA. Disulfide bonds link Cys-144–Cys-187, Cys-178–Cys-220, and Cys-276–Cys-328. The active site involves Cys-147. Residues His-282 and Asn-303 contribute to the active site.

The protein belongs to the peptidase C1 family. In terms of tissue distribution, low expression in mature leaves.

It localises to the vacuole. Functionally, cysteine protease that may have a developmental senescence specific cell death function during apoptosis, heavy metal detoxification, and hypersensitive response. The chain is Senescence-specific cysteine protease SAG39 from Oryza sativa subsp. japonica (Rice).